We begin with the raw amino-acid sequence, 442 residues long: Gamma-glutamyl phosphate reductase (442 aa).

This sequence belongs to the gamma-glutamyl phosphate reductase family.

It is found in the cytoplasm. It catalyses the reaction L-glutamate 5-semialdehyde + phosphate + NADP(+) = L-glutamyl 5-phosphate + NADPH + H(+). The protein operates within amino-acid biosynthesis; L-proline biosynthesis; L-glutamate 5-semialdehyde from L-glutamate: step 2/2. Catalyzes the NADPH-dependent reduction of L-glutamate 5-phosphate into L-glutamate 5-semialdehyde and phosphate. The product spontaneously undergoes cyclization to form 1-pyrroline-5-carboxylate. The protein is Gamma-glutamyl phosphate reductase of Campylobacter curvus (strain 525.92).